The chain runs to 389 residues: Large envelope protein (389 aa).

Met1 is modified (N-acetylmethionine). Gly2 is lipidated: N-myristoyl glycine; by host. Positions 2–108 are pre-S1; the sequence is GQNLSTSNPL…PPLRTTHPQA (107 aa). Positions 2-163 are pre-S; that stretch reads GQNLSTSNPL…SSRIGDPALN (162 aa). The Virion surface; in external conformation segment spans residues 2–170; the sequence is GQNLSTSNPL…ALNMENITSG (169 aa). Residues 2-242 are Intravirion; in internal conformation-facing; sequence GQNLSTSNPL…VGYRWMCLRR (241 aa). 2 disordered regions span residues 76 to 102 and 133 to 154; these read TLPA…PPLR and GGSS…LSTS. Residues 85–95 show a composition bias toward polar residues; the sequence is STNRQSGRQPT. The pre-S2 stretch occupies residues 109 to 163; the sequence is MQWNSTTFHQTLQDPRVRGLYLPAGGSSSGTVNPVPTTASPTLSTSSRIGDPALN. A compositionally biased stretch (low complexity) spans 142 to 154; sequence PVPTTASPTLSTS. The helical transmembrane segment at 171 to 191 threads the bilayer; the sequence is FLGPLLVLQAGFFLLTRILTI. Residues 192–242 are Intravirion; in external conformation-facing; sequence PQSLDSWWTSLSFLGGTTVCLGQNSQSPTSNHSPTSCPPTCVGYRWMCLRR. A helical transmembrane segment spans residues 243–263; the sequence is FIIFLFILLLCLIFLLVLLDY. Topologically, residues 264-337 are virion surface; the sequence is QGMLPVCPLI…WASARFSWLS (74 aa). N-linked (GlcNAc...) asparagine; by host glycosylation is present at Asn309. The chain crosses the membrane as a helical span at residues 338 to 358; the sequence is LLVPFVQWFVGLSPTVWLSVI. At 359 to 364 the chain is on the intravirion side; it reads WMMWYW. A helical transmembrane segment spans residues 365–387; the sequence is GPSLYNTLSPFLPLLPIFFYLWV. Residues 388-389 are Virion surface-facing; that stretch reads YI.

This sequence belongs to the orthohepadnavirus major surface antigen family. As to quaternary structure, in its internal form (Li-HBsAg), interacts with the capsid protein and with the isoform S. Interacts with host chaperone CANX. In terms of assembly, associates with host chaperone CANX through its pre-S2 N glycan; this association may be essential for isoform M proper secretion. Interacts with isoform L. Interacts with the antigens of satellite virus HDV (HDVAgs); this interaction is required for encapsidation of HDV genomic RNA. Post-translationally, isoform M is N-terminally acetylated by host at a ratio of 90%, and N-glycosylated by host at the pre-S2 region. In terms of processing, myristoylated.

It is found in the virion membrane. In terms of biological role, the large envelope protein exists in two topological conformations, one which is termed 'external' or Le-HBsAg and the other 'internal' or Li-HBsAg. In its external conformation the protein attaches the virus to cell receptors and thereby initiating infection. This interaction determines the species specificity and liver tropism. This attachment induces virion internalization predominantly through caveolin-mediated endocytosis. The large envelope protein also assures fusion between virion membrane and endosomal membrane. In its internal conformation the protein plays a role in virion morphogenesis and mediates the contact with the nucleocapsid like a matrix protein. The middle envelope protein plays an important role in the budding of the virion. It is involved in the induction of budding in a nucleocapsid independent way. In this process the majority of envelope proteins bud to form subviral lipoprotein particles of 22 nm of diameter that do not contain a nucleocapsid. The protein is Large envelope protein of Homo sapiens (Human).